A 507-amino-acid polypeptide reads, in one-letter code: ATP synthase subunit alpha, chloroplastic (507 aa).

170–177 serves as a coordination point for ATP; it reads GDRQTGKT. Thr257 is modified (phosphothreonine).

The protein belongs to the ATPase alpha/beta chains family. In terms of assembly, F-type ATPases have 2 components, CF(1) - the catalytic core - and CF(0) - the membrane proton channel. CF(1) has five subunits: alpha(3), beta(3), gamma(1), delta(1), epsilon(1). CF(0) has four main subunits: a, b, b' and c.

It is found in the plastid. It localises to the chloroplast thylakoid membrane. It carries out the reaction ATP + H2O + 4 H(+)(in) = ADP + phosphate + 5 H(+)(out). Functionally, produces ATP from ADP in the presence of a proton gradient across the membrane. The alpha chain is a regulatory subunit. This is ATP synthase subunit alpha, chloroplastic from Capsella bursa-pastoris (Shepherd's purse).